Reading from the N-terminus, the 184-residue chain is Lipid A acyltransferase PagP (184 aa).

Positions 1 to 22 are cleaved as a signal peptide; the sequence is MNIRHGIIAMSSTMLVPLAAEA. Catalysis depends on residues His57, Asp100, and Ser101.

The protein belongs to the lipid A palmitoyltransferase family. As to quaternary structure, homodimer.

The protein localises to the cell outer membrane. It catalyses the reaction a lipid A + a 1,2-diacyl-sn-glycero-3-phosphocholine = a hepta-acyl lipid A + a 2-acyl-sn-glycero-3-phosphocholine. The enzyme catalyses a lipid IVA + a 1,2-diacyl-sn-glycero-3-phosphocholine = a lipid IVB + a 2-acyl-sn-glycero-3-phosphocholine. The catalysed reaction is a lipid IIA + a 1,2-diacyl-sn-glycero-3-phosphocholine = a lipid IIB + a 2-acyl-sn-glycero-3-phosphocholine. In terms of biological role, transfers a fatty acid residue from the sn-1 position of a phospholipid to the N-linked hydroxyfatty acid chain on the proximal unit of lipid A or its precursors. The chain is Lipid A acyltransferase PagP from Methylobacillus flagellatus (strain ATCC 51484 / DSM 6875 / VKM B-1610 / KT).